The sequence spans 611 residues: MEESETVLKLRRQLKEAEEERVKAAHYGLELLESQSDLQNQLEEQRNEMTGTIENLEQEKYSLQREVELKNRMLESVTSECENIRQQQKLILEQLQEQLERNHHRELGEIKDKLEKLKAELDEARLSEKQLKHKLEYQTEVLANKSEELRMMSERVHETMSSEMLTLQLEKTELESAKANLEQEVNELQYREQQLLLTNGTQSRKLEHLQTEKEEREKESVGYFSALEKAREANQDLQAQLDIALQQAQDPNSKGNSLFSEVEDRRAEMERQLISMKVQFQSLQKQHAFSRQQMHRMKVQIATLLQMKGSQSDPEQLERLQAMVAQKNSEIEALVMKVRQLEKSQQVSENGPAVGSSDNLGQGDETYYVDLLKMKLLNSSKENEKIKDELSLQRMKALAESQRVLELERKLFANDRHLKLSQGENMKLRVSLDEIKMKYEPDEMGKIHTQKRRKEQLPLDFPMDNTSAAVTSGTEAQGLYDATAGETCTAESTDGRIHSKEDLSLSTKEQDPSSVAVKPKELPNGPPPKERKRVRIMEDENNAQDLNKRNTHNCSVTSASPRSTSEDATSESKRFDEEQEKRKQERKSRLRAPPVLHVPSKPNATTQCPQQ.

Positions 1–390 (MEESETVLKL…KENEKIKDEL (390 aa)) form a coiled coil. Residues 487 to 611 (TCTAESTDGR…PNATTQCPQQ (125 aa)) are disordered. The segment covering 493-511 (TDGRIHSKEDLSLSTKEQD) has biased composition (basic and acidic residues). Polar residues predominate over residues 552 to 567 (HNCSVTSASPRSTSED). The segment covering 570 to 583 (SESKRFDEEQEKRK) has biased composition (basic and acidic residues). Residues 602 to 611 (PNATTQCPQQ) are compositionally biased toward polar residues.

It belongs to the Spindly family.

It is found in the chromosome. It localises to the centromere. Its subcellular location is the kinetochore. Functionally, required for the localization of dynein and dynactin to the mitotic kintochore. Dynein is believed to control the initial lateral interaction between the kinetochore and spindle microtubules and to facilitate the subsequent formation of end-on kinetochore-microtubule attachments mediated by the NDC80 complex. The chain is Protein Spindly-A (spdl1-a) from Xenopus laevis (African clawed frog).